Consider the following 233-residue polypeptide: Chromosome partition protein MukE (233 aa).

The segment at Ser-207–Glu-233 is disordered.

Belongs to the MukE family. Interacts, and probably forms a ternary complex, with MukF and MukB. The complex formation is stimulated by calcium or magnesium.

Its subcellular location is the cytoplasm. The protein localises to the nucleoid. In terms of biological role, involved in chromosome condensation, segregation and cell cycle progression. May participate in facilitating chromosome segregation by condensation DNA from both sides of a centrally located replisome during cell division. Probably acts via its interaction with MukB and MukF. This is Chromosome partition protein MukE from Yersinia pestis.